Reading from the N-terminus, the 378-residue chain is Biotin synthase, mitochondrial (378 aa).

A mitochondrion-targeting transit peptide spans 1 to 26 (MMLVRSVFRSQLRPSVSGGLQSASCY). Positions 79–308 (REVQQCTLLS…KAMVRLSAGR (230 aa)) constitute a Radical SAM core domain. The [4Fe-4S] cluster site is built by Cys94, Cys98, and Cys101. Positions 138, 171, 231, and 303 each coordinate [2Fe-2S] cluster. The segment at 357–378 (PPSFSEDDSESENCEKVASASH) is disordered.

Belongs to the radical SAM superfamily. Biotin synthase family. [4Fe-4S] cluster serves as cofactor. [2Fe-2S] cluster is required as a cofactor.

It localises to the mitochondrion. It carries out the reaction (4R,5S)-dethiobiotin + (sulfur carrier)-SH + 2 reduced [2Fe-2S]-[ferredoxin] + 2 S-adenosyl-L-methionine = (sulfur carrier)-H + biotin + 2 5'-deoxyadenosine + 2 L-methionine + 2 oxidized [2Fe-2S]-[ferredoxin]. The protein operates within cofactor biosynthesis; biotin biosynthesis; biotin from 7,8-diaminononanoate: step 2/2. The protein is Biotin synthase, mitochondrial (BIO2) of Arabidopsis thaliana (Mouse-ear cress).